The chain runs to 308 residues: Cell division protein FtsX (308 aa).

At 1–24 (MISRFFRHLFEALKSLKRNGWMTV) the chain is on the cytoplasmic side. The helical transmembrane segment at 25–45 (AAVSSVMITLTLVAIFASVIF) threads the bilayer. The Extracellular segment spans residues 46–178 (NTAKLATDIE…NTERLFKLAS (133 aa)). The chain crosses the membrane as a helical span at residues 179–199 (FIRVWGLGIAALLIFIAVFLI). Topologically, residues 200–236 (SNTIRITIISRSREIQIMRLVGAKNSYIRGPFLLEGA) are cytoplasmic. The helical transmembrane segment at 237–257 (FIGLLGAIAPSVLVFIVYQIV) threads the bilayer. The Extracellular portion of the chain corresponds to 258–276 (YQSVNKSLVGQNLSMISPD). The chain crosses the membrane as a helical span at residues 277 to 297 (LFSPLMIALLFVIGVFIGSLG). Residues 298–308 (SGISMRRFLKI) lie on the Cytoplasmic side of the membrane.

The protein belongs to the ABC-4 integral membrane protein family. FtsX subfamily. As to quaternary structure, homodimer. Interacts with FtsE; forms a membrane-associated complex. Interacts (via large extracellular loop) with PcsB (via N-terminal coiled-coil domain). This interaction directs PcsB to equatorial and septal sites of dividing cells.

Its subcellular location is the cell membrane. Its function is as follows. Part of the ABC transporter FtsEX involved in asymmetric cellular division facilitating the initiation of sporulation. Required in maintaining normal growth and cellular morphology. The sequence is that of Cell division protein FtsX from Streptococcus pneumoniae serotype 2 (strain D39 / NCTC 7466).